The primary structure comprises 322 residues: Probable manganese-dependent inorganic pyrophosphatase (322 aa).

Residues His-10, Asp-14, Asp-16, Asp-86, His-108, and Asp-160 each coordinate Mn(2+).

This sequence belongs to the PPase class C family. The cofactor is Mn(2+).

It is found in the cytoplasm. It catalyses the reaction diphosphate + H2O = 2 phosphate + H(+). In Archaeoglobus fulgidus (strain ATCC 49558 / DSM 4304 / JCM 9628 / NBRC 100126 / VC-16), this protein is Probable manganese-dependent inorganic pyrophosphatase (ppaC).